We begin with the raw amino-acid sequence, 151 residues long: Large ribosomal subunit protein bL9 (151 aa).

Belongs to the bacterial ribosomal protein bL9 family.

In terms of biological role, binds to the 23S rRNA. The sequence is that of Large ribosomal subunit protein bL9 from Prochlorococcus marinus (strain AS9601).